Reading from the N-terminus, the 460-residue chain is Elongation factor 1-alpha (460 aa).

The residue at position 2 (Gly-2) is a N,N,N-trimethylglycine. Lys-3 is subject to N6,N6-dimethyllysine; alternate. Lys-3 carries the post-translational modification N6-methyllysine; alternate. The tr-type G domain maps to 6-241 (KTHINVVVIG…DSIEPPKRPT (236 aa)). A G1 region spans residues 15–22 (GHVDSGKS). 15–22 (GHVDSGKS) serves as a coordination point for GTP. A G2 region spans residues 71-75 (GITID). Lys-80 carries the post-translational modification N6,N6,N6-trimethyllysine. Positions 92–95 (DAPG) are G3. GTP contacts are provided by residues 92 to 96 (DAPGH) and 154 to 157 (NKMD). The interval 154-157 (NKMD) is G4. The G5 stretch occupies residues 193 to 195 (SGF). N6,N6-dimethyllysine; alternate is present on Lys-317. Lys-317 is modified (N6-methyllysine; alternate). An N6-methyllysine modification is found at Lys-391.

It belongs to the TRAFAC class translation factor GTPase superfamily. Classic translation factor GTPase family. EF-Tu/EF-1A subfamily.

It is found in the cytoplasm. In terms of biological role, this protein promotes the GTP-dependent binding of aminoacyl-tRNA to the A-site of ribosomes during protein biosynthesis. The sequence is that of Elongation factor 1-alpha (tef1) from Hypocrea jecorina (Trichoderma reesei).